Consider the following 85-residue polypeptide: uncharacterized protein (85 aa).

The stretch at 17-53 (KKRYEMLVQELLKEDDEEREKILAEELELLLDFLKKA) forms a coiled coil.

This is an uncharacterized protein from Archaeoglobus fulgidus (strain ATCC 49558 / DSM 4304 / JCM 9628 / NBRC 100126 / VC-16).